A 239-amino-acid polypeptide reads, in one-letter code: NAD-dependent protein deacylase (239 aa).

The Deacetylase sirtuin-type domain occupies 1-239 (MNVLILTGAG…PKLLNHFSAM (239 aa)). 8–27 (GAGISAESGIPTFRDANGLW) contacts NAD(+). Substrate contacts are provided by Tyr-52 and Arg-55. Residue 93-96 (QNID) coordinates NAD(+). His-111 (proton acceptor) is an active-site residue. Residues 182 to 184 (GTS), 207 to 209 (NLD), and Ala-225 contribute to the NAD(+) site.

The protein belongs to the sirtuin family. Class III subfamily.

The protein resides in the cytoplasm. The catalysed reaction is N(6)-acetyl-L-lysyl-[protein] + NAD(+) + H2O = 2''-O-acetyl-ADP-D-ribose + nicotinamide + L-lysyl-[protein]. It catalyses the reaction N(6)-succinyl-L-lysyl-[protein] + NAD(+) + H2O = 2''-O-succinyl-ADP-D-ribose + nicotinamide + L-lysyl-[protein]. Its function is as follows. NAD-dependent lysine deacetylase and desuccinylase that specifically removes acetyl and succinyl groups on target proteins. Modulates the activities of several proteins which are inactive in their acylated form. This is NAD-dependent protein deacylase from Rhodopirellula baltica (strain DSM 10527 / NCIMB 13988 / SH1).